Consider the following 151-residue polypeptide: Chaperonin GroEL (151 aa).

ATP is bound at residue 41-45 (DGTTT).

Belongs to the chaperonin (HSP60) family. As to quaternary structure, forms a cylinder of 14 subunits composed of two heptameric rings stacked back-to-back. Interacts with the co-chaperonin GroES.

Its subcellular location is the cytoplasm. It carries out the reaction ATP + H2O + a folded polypeptide = ADP + phosphate + an unfolded polypeptide.. Together with its co-chaperonin GroES, plays an essential role in assisting protein folding. The GroEL-GroES system forms a nano-cage that allows encapsulation of the non-native substrate proteins and provides a physical environment optimized to promote and accelerate protein folding. This is Chaperonin GroEL from Mycolicibacterium fortuitum (Mycobacterium fortuitum).